The chain runs to 152 residues: Ribonuclease pancreatic beta-type (152 aa).

A signal peptide spans Met-1–Ser-25. Residues Ser-25–Tyr-53 are disordered. The span at Glu-27–Ser-45 shows a compositional bias: basic and acidic residues. Substrate is bound by residues Lys-35 and Arg-38. The active-site Proton acceptor is the His-40. 4 disulfides stabilise this stretch: Cys-54–Cys-112, Cys-68–Cys-123, Cys-86–Cys-138, and Cys-93–Cys-100. Substrate-binding positions include Lys-69 to Thr-73 and Lys-94. Residue His-147 is the Proton donor of the active site.

The protein belongs to the pancreatic ribonuclease family. In terms of assembly, monomer.

The protein resides in the secreted. It carries out the reaction an [RNA] containing cytidine + H2O = an [RNA]-3'-cytidine-3'-phosphate + a 5'-hydroxy-ribonucleotide-3'-[RNA].. The enzyme catalyses an [RNA] containing uridine + H2O = an [RNA]-3'-uridine-3'-phosphate + a 5'-hydroxy-ribonucleotide-3'-[RNA].. Functionally, endonuclease that catalyzes the cleavage of RNA on the 3' side of pyrimidine nucleotides. Acts on single-stranded and double-stranded RNA. This Rattus tiomanicus (Malayan field rat) protein is Ribonuclease pancreatic beta-type.